The primary structure comprises 149 residues: Calmodulin (149 aa).

Alanine 2 is modified (N-acetylalanine). EF-hand domains are found at residues glutamate 8–asparagine 43, proline 44–aspartate 79, aspartate 81–lysine 116, and leucine 117–lysine 149. Ca(2+)-binding residues include aspartate 21, aspartate 23, aspartate 25, threonine 27, glutamate 32, aspartate 57, aspartate 59, asparagine 61, threonine 63, glutamate 68, aspartate 94, aspartate 96, asparagine 98, and glutamate 105. Position 116 is an N6,N6,N6-trimethyllysine (lysine 116). 5 residues coordinate Ca(2+): aspartate 130, aspartate 132, aspartate 134, glutamine 136, and glutamate 141.

It belongs to the calmodulin family.

Calmodulin mediates the control of a large number of enzymes, ion channels and other proteins by Ca(2+). Among the enzymes to be stimulated by the calmodulin-Ca(2+) complex are a number of protein kinases and phosphatases. The polypeptide is Calmodulin (cam) (Saccharina japonica (Sweet kelp)).